We begin with the raw amino-acid sequence, 183 residues long: Inosine/xanthosine triphosphatase (183 aa).

The protein belongs to the YjjX NTPase family. In terms of assembly, homodimer. The cofactor is Mg(2+). It depends on Mn(2+) as a cofactor.

It catalyses the reaction XTP + H2O = XDP + phosphate + H(+). The enzyme catalyses ITP + H2O = IDP + phosphate + H(+). Its function is as follows. Phosphatase that hydrolyzes non-canonical purine nucleotides such as XTP and ITP to their respective diphosphate derivatives. Probably excludes non-canonical purines from DNA/RNA precursor pool, thus preventing their incorporation into DNA/RNA and avoiding chromosomal lesions. The sequence is that of Inosine/xanthosine triphosphatase from Vibrio cholerae serotype O1 (strain ATCC 39315 / El Tor Inaba N16961).